A 354-amino-acid polypeptide reads, in one-letter code: Histidinol-phosphate aminotransferase (354 aa).

K210 is modified (N6-(pyridoxal phosphate)lysine).

This sequence belongs to the class-II pyridoxal-phosphate-dependent aminotransferase family. Histidinol-phosphate aminotransferase subfamily. As to quaternary structure, homodimer. Requires pyridoxal 5'-phosphate as cofactor.

It catalyses the reaction L-histidinol phosphate + 2-oxoglutarate = 3-(imidazol-4-yl)-2-oxopropyl phosphate + L-glutamate. It functions in the pathway amino-acid biosynthesis; L-histidine biosynthesis; L-histidine from 5-phospho-alpha-D-ribose 1-diphosphate: step 7/9. The polypeptide is Histidinol-phosphate aminotransferase (Clostridium botulinum (strain 657 / Type Ba4)).